A 974-amino-acid chain; its full sequence is Translation initiation factor IF-2 (974 aa).

Disordered regions lie at residues 67 to 86 (TRKH…ARTI), 101 to 133 (DVAE…RREA), and 146 to 385 (RQER…TFQA). Low complexity predominate over residues 105–114 (GAEQGQAQVA). Basic and acidic residues-rich tracts occupy residues 121–133 (ELKR…RREA) and 146–181 (RQER…KRAA). Residues 182–197 (AEAAAAQQAAAQQAAE) are compositionally biased toward low complexity. Positions 210 to 261 (EEARAAAERAAQREAAKKAEDAAREAADKARAEQEEIRKRREAAEAEARAIR) are enriched in basic and acidic residues. Low complexity predominate over residues 313–329 (PAGATPATTQAPAAGAG). The span at 358–371 (SSGGVDRGWRGGPK) shows a compositional bias: gly residues. The region spanning 474–643 (PRPPVVTVMG…LLQAEVLELK (170 aa)) is the tr-type G domain. The G1 stretch occupies residues 483 to 490 (GHVDHGKT). 483–490 (GHVDHGKT) serves as a coordination point for GTP. Residues 508–512 (GITQH) form a G2 region. Positions 529 to 532 (DTPG) are G3. Residues 529 to 533 (DTPGH) and 583 to 586 (NKID) each bind GTP. The G4 stretch occupies residues 583-586 (NKID). The G5 stretch occupies residues 619-621 (SAK).

This sequence belongs to the TRAFAC class translation factor GTPase superfamily. Classic translation factor GTPase family. IF-2 subfamily.

It localises to the cytoplasm. Functionally, one of the essential components for the initiation of protein synthesis. Protects formylmethionyl-tRNA from spontaneous hydrolysis and promotes its binding to the 30S ribosomal subunits. Also involved in the hydrolysis of GTP during the formation of the 70S ribosomal complex. The chain is Translation initiation factor IF-2 from Burkholderia vietnamiensis (strain G4 / LMG 22486) (Burkholderia cepacia (strain R1808)).